A 296-amino-acid polypeptide reads, in one-letter code: Enoyl-CoA hydratase ACTT3 (296 aa).

Residues 294 to 296 carry the Peroxisomal targeting signal type 1 motif; sequence PKL.

Belongs to the enoyl-CoA hydratase/isomerase family.

The protein resides in the peroxisome. The catalysed reaction is a (3S)-3-hydroxyacyl-CoA = a (2E)-enoyl-CoA + H2O. It catalyses the reaction a 4-saturated-(3S)-3-hydroxyacyl-CoA = a (3E)-enoyl-CoA + H2O. It participates in mycotoxin biosynthesis. Its function is as follows. Enoyl-CoA hydratase; part of the gene clusters that mediate the biosynthesis of the host-selective toxins (HSTs) ACT-toxins responsible for brown spot of tangerine disease by the tangerine pathotype which affects tangerines and mandarins. ACT-toxins consist of three moieties, 9,10-epoxy-8-hydroxy-9-methyl-decatrienoic acid (EDA), valine and a polyketide. ACT-toxin I is toxic to both citrus and pear; toxin II the 5''-deoxy derivative of ACT-toxin I, is highly toxic to pear and slightly toxic to citrus. On cellular level, ACT-toxins affect plasma membrane of susceptible cells and cause a sudden increase in loss of K(+) after a few minutes of toxin treatment. The acyl-CoA ligase ACTT1, the hydrolase ACTT2, the enoyl-CoA hydratases ACTT3 and ACTT6, and the acyl-CoA synthetase ACTT5 are all involved in the biosynthesis of the AK-, AF- and ACT-toxin common 9,10-epoxy-8-hydroxy-9-methyl-decatrienoic acid (EDA) structural moiety. The exact role of each enzyme, and of additional enzymes identified within the AF-toxin clusters have still to be determined. On the other hand, ACTTS1 to ACTTS4 are specific to the tangerine pathotype. The function of ACTTS3 is to elongate the polyketide chain portion of ACT-toxin that is unique to this toxin. The enoyl-reductase ACTTS2 might complement the missing enoyl-reductase (ER) domain in ACTTS3 in the synthesis of the polyketide portion of ACT-toxin. The roles of the nonribosomal peptide synthetases-related proteins ACTTS1 and ACTTS4 have also still not been elucidated. This chain is Enoyl-CoA hydratase ACTT3, found in Alternaria alternata (Alternaria rot fungus).